A 416-amino-acid chain; its full sequence is Tyrosine--tRNA ligase (416 aa).

Residue Tyr-41 participates in L-tyrosine binding. The 'HIGH' region motif lies at 46–55 (ATASSLHAGH). L-tyrosine is bound by residues Tyr-175 and Gln-179. Residues 235–239 (KMGKT) carry the 'KMSKS' region motif. Residue Lys-238 participates in ATP binding. Residues 349–416 (LPVAKAFVDA…KKKHVLLKPV (68 aa)) enclose the S4 RNA-binding domain.

This sequence belongs to the class-I aminoacyl-tRNA synthetase family. TyrS type 1 subfamily. As to quaternary structure, homodimer.

Its subcellular location is the cytoplasm. It carries out the reaction tRNA(Tyr) + L-tyrosine + ATP = L-tyrosyl-tRNA(Tyr) + AMP + diphosphate + H(+). In terms of biological role, catalyzes the attachment of tyrosine to tRNA(Tyr) in a two-step reaction: tyrosine is first activated by ATP to form Tyr-AMP and then transferred to the acceptor end of tRNA(Tyr). In Xanthobacter autotrophicus (strain ATCC BAA-1158 / Py2), this protein is Tyrosine--tRNA ligase.